Consider the following 513-residue polypeptide: ATP synthase subunit alpha 1 (513 aa).

ATP is bound at residue 169–176 (GDRQCGKT).

The protein belongs to the ATPase alpha/beta chains family. As to quaternary structure, F-type ATPases have 2 components, CF(1) - the catalytic core - and CF(0) - the membrane proton channel. CF(1) has five subunits: alpha(3), beta(3), gamma(1), delta(1), epsilon(1). CF(0) has three main subunits: a(1), b(2) and c(9-12). The alpha and beta chains form an alternating ring which encloses part of the gamma chain. CF(1) is attached to CF(0) by a central stalk formed by the gamma and epsilon chains, while a peripheral stalk is formed by the delta and b chains.

The protein resides in the cell inner membrane. The catalysed reaction is ATP + H2O + 4 H(+)(in) = ADP + phosphate + 5 H(+)(out). In terms of biological role, produces ATP from ADP in the presence of a proton gradient across the membrane. The alpha chain is a regulatory subunit. The protein is ATP synthase subunit alpha 1 of Burkholderia pseudomallei (strain 1710b).